A 37-amino-acid polypeptide reads, in one-letter code: Photosystem I reaction center subunit VIII (37 aa).

Residues 7 to 27 (LPSIFVPLVGLVFPAIAMASL) traverse the membrane as a helical segment.

This sequence belongs to the PsaI family.

It is found in the plastid. The protein resides in the chloroplast thylakoid membrane. Functionally, may help in the organization of the PsaL subunit. The protein is Photosystem I reaction center subunit VIII of Populus alba (White poplar).